The primary structure comprises 724 residues: Probable serine/threonine-protein kinase KKQ8 (724 aa).

Disordered regions lie at residues 1–81 (MVMQ…RQRS) and 93–188 (HPFR…KDIL). Serine 19 is modified (phosphoserine). Over residues 45 to 54 (PYRSSSTSPK) the composition is skewed to low complexity. A compositionally biased stretch (polar residues) spans 95-106 (FRQTGSGASNSP). Low complexity predominate over residues 143 to 162 (RSSSVSSCDSSNGTTSSSDS). Residues serine 232, serine 238, and serine 241 each carry the phosphoserine modification. Composition is skewed to polar residues over residues 318–329 (NASSLLPNVEKS) and 338–351 (GQSP…SPTQ). The tract at residues 318-355 (NASSLLPNVEKSQTNHEKRTGQSPNDSNRSSPTQGRED) is disordered. In terms of domain architecture, Protein kinase spans 412-712 (GHPVGLVGAG…VGKLLDMQWM (301 aa)). ATP is bound by residues 418-426 (VGAGAYGEV) and lysine 455. Aspartate 563 (proton acceptor) is an active-site residue.

This sequence belongs to the protein kinase superfamily. CAMK Ser/Thr protein kinase family. NPR/HAL subfamily. HAL5 sub-subfamily.

It localises to the cytoplasm. It catalyses the reaction L-seryl-[protein] + ATP = O-phospho-L-seryl-[protein] + ADP + H(+). The enzyme catalyses L-threonyl-[protein] + ATP = O-phospho-L-threonyl-[protein] + ADP + H(+). The polypeptide is Probable serine/threonine-protein kinase KKQ8 (KKQ8) (Saccharomyces cerevisiae (strain YJM789) (Baker's yeast)).